Here is a 204-residue protein sequence, read N- to C-terminus: Probable nicotinate-nucleotide adenylyltransferase (204 aa).

This sequence belongs to the NadD family.

It catalyses the reaction nicotinate beta-D-ribonucleotide + ATP + H(+) = deamido-NAD(+) + diphosphate. The protein operates within cofactor biosynthesis; NAD(+) biosynthesis; deamido-NAD(+) from nicotinate D-ribonucleotide: step 1/1. Its function is as follows. Catalyzes the reversible adenylation of nicotinate mononucleotide (NaMN) to nicotinic acid adenine dinucleotide (NaAD). The polypeptide is Probable nicotinate-nucleotide adenylyltransferase (Dehalococcoides mccartyi (strain ATCC BAA-2266 / KCTC 15142 / 195) (Dehalococcoides ethenogenes (strain 195))).